A 215-amino-acid chain; its full sequence is Small ribosomal subunit protein eS1 (215 aa).

Positions 195–215 (SGMQEPQKNEPAPGGEAIAQN) are disordered.

Belongs to the eukaryotic ribosomal protein eS1 family.

This Thermoplasma acidophilum (strain ATCC 25905 / DSM 1728 / JCM 9062 / NBRC 15155 / AMRC-C165) protein is Small ribosomal subunit protein eS1.